Consider the following 812-residue polypeptide: Valine--tRNA ligase (812 aa).

The 'HIGH' region motif lies at 46 to 56 (PTVSGQLHIGH). Positions 536-540 (KMSKS) match the 'KMSKS' region motif. K539 contacts ATP.

It belongs to the class-I aminoacyl-tRNA synthetase family. ValS type 2 subfamily. As to quaternary structure, monomer.

Its subcellular location is the cytoplasm. The enzyme catalyses tRNA(Val) + L-valine + ATP = L-valyl-tRNA(Val) + AMP + diphosphate. Its function is as follows. Catalyzes the attachment of valine to tRNA(Val). As ValRS can inadvertently accommodate and process structurally similar amino acids such as threonine, to avoid such errors, it has a 'posttransfer' editing activity that hydrolyzes mischarged Thr-tRNA(Val) in a tRNA-dependent manner. In Rickettsia akari (strain Hartford), this protein is Valine--tRNA ligase.